We begin with the raw amino-acid sequence, 306 residues long: Agmatinase (306 aa).

The Mn(2+) site is built by His126, Asp149, His151, Asp153, Asp230, and Asp232.

The protein belongs to the arginase family. Agmatinase subfamily. Requires Mn(2+) as cofactor.

The enzyme catalyses agmatine + H2O = urea + putrescine. It participates in amine and polyamine biosynthesis; putrescine biosynthesis via agmatine pathway; putrescine from agmatine: step 1/1. In terms of biological role, catalyzes the formation of putrescine from agmatine. The protein is Agmatinase of Klebsiella pneumoniae (strain 342).